The primary structure comprises 142 residues: MKTFTAKPETVKRDWYVVDATGKTLGRLATELARRLRGKHKAEYTPHVDTGDYIIVLNADKVAVTGNKRTDKVYYHHTGHIGGIKQVSFEEMIARRPERVIEIAVKGMLPKGPLGRAMFRKLKVYAGNEHNHAAQQPQVLDI.

Belongs to the universal ribosomal protein uL13 family. Part of the 50S ribosomal subunit.

Functionally, this protein is one of the early assembly proteins of the 50S ribosomal subunit, although it is not seen to bind rRNA by itself. It is important during the early stages of 50S assembly. The sequence is that of Large ribosomal subunit protein uL13 from Shigella sonnei (strain Ss046).